Consider the following 130-residue polypeptide: Ribonuclease P protein component 2 (130 aa).

The protein belongs to the eukaryotic/archaeal RNase P protein component 2 family. Consists of a catalytic RNA component and at least 4-5 protein subunits.

The protein resides in the cytoplasm. The catalysed reaction is Endonucleolytic cleavage of RNA, removing 5'-extranucleotides from tRNA precursor.. In terms of biological role, part of ribonuclease P, a protein complex that generates mature tRNA molecules by cleaving their 5'-ends. This is Ribonuclease P protein component 2 from Methanococcus vannielii (strain ATCC 35089 / DSM 1224 / JCM 13029 / OCM 148 / SB).